Reading from the N-terminus, the 124-residue chain is Small ribosomal subunit protein uS12 (124 aa).

A 3-methylthioaspartic acid modification is found at aspartate 89. Residues serine 104 to lysine 124 are disordered. Positions asparagine 111–lysine 124 are enriched in basic residues.

The protein belongs to the universal ribosomal protein uS12 family. As to quaternary structure, part of the 30S ribosomal subunit. Contacts proteins S8 and S17. May interact with IF1 in the 30S initiation complex.

Its function is as follows. With S4 and S5 plays an important role in translational accuracy. Interacts with and stabilizes bases of the 16S rRNA that are involved in tRNA selection in the A site and with the mRNA backbone. Located at the interface of the 30S and 50S subunits, it traverses the body of the 30S subunit contacting proteins on the other side and probably holding the rRNA structure together. The combined cluster of proteins S8, S12 and S17 appears to hold together the shoulder and platform of the 30S subunit. The protein is Small ribosomal subunit protein uS12 of Desulforamulus reducens (strain ATCC BAA-1160 / DSM 100696 / MI-1) (Desulfotomaculum reducens).